We begin with the raw amino-acid sequence, 363 residues long: Glutamate 5-kinase (363 aa).

Residue K3 coordinates ATP. Positions 43, 128, and 140 each coordinate substrate. Residues 160–161 (TD) and 202–208 (TGGMRTK) each bind ATP. The PUA domain maps to 267–349 (AGAILIDDGA…REIENVLGYS (83 aa)).

Belongs to the glutamate 5-kinase family.

The protein resides in the cytoplasm. It carries out the reaction L-glutamate + ATP = L-glutamyl 5-phosphate + ADP. It functions in the pathway amino-acid biosynthesis; L-proline biosynthesis; L-glutamate 5-semialdehyde from L-glutamate: step 1/2. Functionally, catalyzes the transfer of a phosphate group to glutamate to form L-glutamate 5-phosphate. In Xanthomonas axonopodis pv. citri (strain 306), this protein is Glutamate 5-kinase.